The sequence spans 775 residues: Putative ankyrin repeat protein RBE_0801 (775 aa).

6 ANK repeats span residues 66-95 (HSLP…ENTE), 300-329 (ATTV…KVEN), 331-356 (ILQE…IKSF), 357-385 (TNDY…NIVG), 447-476 (IPDV…SFDF), and 523-552 (GDDK…KQGI).

The polypeptide is Putative ankyrin repeat protein RBE_0801 (Rickettsia bellii (strain RML369-C)).